The sequence spans 534 residues: Protein tweety homolog 2 (534 aa).

The Extracellular segment spans residues 1-44 (MAAARVEYIAPWWVYWLHNFPHVDLSLRQKSPDFNPKDPGYQQT). The helical transmembrane segment at 45–65 (LLFVALIVALCAAVNLLFVSV) threads the bilayer. Over 66–87 (YLICLCCCKKEDETETKKTSSC) the chain is Cytoplasmic. The chain crosses the membrane as a helical span at residues 88–108 (CVTWTAAVSGLLCCAAVGIGF). At 109 to 213 (YGNSETNDGV…QTSTIEYYRW (105 aa)) the chain is on the extracellular side. E113 and D116 together coordinate Ca(2+). N129 carries an N-linked (GlcNAc...) asparagine glycan. The short motif at 164-166 (RGD) is the RGD element. N-linked (GlcNAc...) asparagine glycosylation occurs at N197. A helical transmembrane segment spans residues 214–234 (LSYLLLFISYVVICLVTCVGL). Residues 235–240 (AKKSKC) lie on the Cytoplasmic side of the membrane. A helical transmembrane segment spans residues 241 to 261 (LLLIMLCFGLIALMLSWTSLA). Topologically, residues 262–388 (LETSSAMGTS…IGICYDGVEG (127 aa)) are extracellular. Intrachain disulfides connect C274-C382 and C300-C367. N-linked (GlcNAc...) asparagine glycans are attached at residues N283 and N352. Residues 389–409 (MLYLGLFSLLAALAFTAMVCA) traverse the membrane as a helical segment. Topologically, residues 410–534 (MPQAWKHLEA…SSIYSNVFPA (125 aa)) are cytoplasmic.

It belongs to the tweety family. In terms of assembly, forms cis-homodimers in the presence of Ca(+2) and forms monomers and trans-dimers in the absence of Ca(2+).

It localises to the cell membrane. It catalyses the reaction chloride(in) = chloride(out). It carries out the reaction L-glutamate(out) = L-glutamate(in). In terms of biological role, may act as a calcium-independent, swelling-dependent volume-regulated anion channel (VRAC-swell) which plays a pivotal role in the process of regulatory volume decrease (RVD) in the brain through the efflux of anions like chloride and organic osmolytes like glutamate. Probable large-conductance Ca(2+)-activated chloride channel. The polypeptide is Protein tweety homolog 2 (ttyh2) (Xenopus tropicalis (Western clawed frog)).